A 488-amino-acid chain; its full sequence is 3-octaprenyl-4-hydroxybenzoate carboxy-lyase (488 aa).

Asparagine 172 contacts Mn(2+). Residues 175–177, 189–191, and 194–195 each bind prenylated FMN; these read IYR, RWL, and RG. Glutamate 238 contributes to the Mn(2+) binding site. The active-site Proton donor is the aspartate 287.

It belongs to the UbiD family. Homohexamer. Prenylated FMN is required as a cofactor. Requires Mn(2+) as cofactor.

The protein resides in the cell membrane. The catalysed reaction is a 4-hydroxy-3-(all-trans-polyprenyl)benzoate + H(+) = a 2-(all-trans-polyprenyl)phenol + CO2. It participates in cofactor biosynthesis; ubiquinone biosynthesis. Its function is as follows. Catalyzes the decarboxylation of 3-octaprenyl-4-hydroxy benzoate to 2-octaprenylphenol, an intermediate step in ubiquinone biosynthesis. This is 3-octaprenyl-4-hydroxybenzoate carboxy-lyase from Legionella pneumophila (strain Paris).